A 484-amino-acid chain; its full sequence is Deoxyribodipyrimidine photo-lyase (484 aa).

Residues 3–132 enclose the Photolyase/cryptochrome alpha/beta domain; sequence APILFWHRRD…RAVQLWDQLL (130 aa). Coenzyme F420-(gamma-Glu)n is bound by residues 36–38, arginine 51, and 101–109; these read CLD and DIEPYGRDR. Residues 141–148 form a DNA-binding region; sequence GSGNPYSV. Tyrosine 228 provides a ligand contact to FAD. Arginine 232 lines the DNA pocket. 240 to 247 lines the FAD pocket; sequence TSGLSPAL. Lysine 248 is a coenzyme F420-(gamma-Glu)n binding site. Interaction with DNA stretches follow at residues 283–290 and 349–350; these read ELAWREFY and NR. FAD-binding positions include 346 to 352, 380 to 382, and asparagine 386; these read WMHNRCW and DGD. DNA is bound by residues glutamine 411 and lysine 472.

This sequence belongs to the DNA photolyase class-1 family. In terms of assembly, monomer. The cofactor is FAD. Coenzyme F420-(gamma-Glu)n is required as a cofactor.

It carries out the reaction cyclobutadipyrimidine (in DNA) = 2 pyrimidine residues (in DNA).. Its function is as follows. Involved in repair of UV radiation-induced DNA damage. Catalyzes the light-dependent monomerization (300-600 nm) of cyclobutyl pyrimidine dimers (in cis-syn configuration), which are formed between adjacent bases on the same DNA strand upon exposure to ultraviolet radiation. The chain is Deoxyribodipyrimidine photo-lyase (phr) from Synechococcus sp. (strain ATCC 27144 / PCC 6301 / SAUG 1402/1) (Anacystis nidulans).